The following is a 375-amino-acid chain: POU domain, class 3, transcription factor 1-A (375 aa).

Disordered stretches follow at residues 1–29, 67–138, and 151–200; these read MAATAQYLPRNNSLPSNPLMHPDSDRMHQ, PASD…HQPL, and MLGP…PSSD. Polar residues-rich tracts occupy residues 107–117, 129–138, and 151–160; these read VHQQSPSSHAW, SPSSNSHQPL, and MLGPQASSLH. Residues 162-177 are compositionally biased toward basic and acidic residues; that stretch reads SMRDPLHDDPGVHDTQ. The POU-specific domain maps to 194–268; that stretch reads EDAPSSDDLE…LLNKWLEETD (75 aa). A DNA-binding region (homeobox) is located at residues 286-345; sequence KRKKRTSIEVGVKGALENHFLKCPKPSAHEITSLADSLQLEKEVVRVWFCNRRQKEKRMT.

It belongs to the POU transcription factor family. Class-3 subfamily. In terms of tissue distribution, in embryos at the neural fold stage, localized primarily in the anterior neural plate, and localized mostly in the anterior region of the nerve cord of neurula stage embryos. In tailbud stages, expressed predominantly in the eye and brain, with weak expression along the length of the nerve cord. In adults, expressed in skin and brain.

It localises to the nucleus. Acts as a transcription factor. May play a role in neuronal differentiation. The protein is POU domain, class 3, transcription factor 1-A (pou3f1-a) of Xenopus laevis (African clawed frog).